We begin with the raw amino-acid sequence, 315 residues long: Protoheme IX farnesyltransferase (315 aa).

Helical transmembrane passes span 34 to 54 (VISL…GPIN), 55 to 75 (PLIA…AGAI), 105 to 125 (ALGF…LAAN), 127 to 147 (LAAF…TMWL), 155 to 175 (IVIG…ATTG), 177 to 197 (LGVL…PHFW), 226 to 246 (WQIL…SFLH), 251 to 271 (LYTG…VGVL), and 294 to 314 (YSLA…FLIM).

The protein belongs to the UbiA prenyltransferase family. Protoheme IX farnesyltransferase subfamily.

It is found in the cell inner membrane. It catalyses the reaction heme b + (2E,6E)-farnesyl diphosphate + H2O = Fe(II)-heme o + diphosphate. Its pathway is porphyrin-containing compound metabolism; heme O biosynthesis; heme O from protoheme: step 1/1. Converts heme B (protoheme IX) to heme O by substitution of the vinyl group on carbon 2 of heme B porphyrin ring with a hydroxyethyl farnesyl side group. The sequence is that of Protoheme IX farnesyltransferase from Gluconacetobacter diazotrophicus (strain ATCC 49037 / DSM 5601 / CCUG 37298 / CIP 103539 / LMG 7603 / PAl5).